The sequence spans 146 residues: Large ribosomal subunit protein uL15 (146 aa).

The segment covering 1-13 has biased composition (basic and acidic residues); the sequence is MKLHELKPAEGSR. Residues 1–57 are disordered; that stretch reads MKLHELKPAEGSRKVRNRVGRGTSSGNGKTSGRGQKGQKARSGVGLRPGFEGGQTPL. Positions 23 to 35 are enriched in gly residues; the sequence is TSSGNGKTSGRGQ.

The protein belongs to the universal ribosomal protein uL15 family. In terms of assembly, part of the 50S ribosomal subunit.

Binds to the 23S rRNA. This Streptococcus thermophilus (strain CNRZ 1066) protein is Large ribosomal subunit protein uL15.